A 174-amino-acid polypeptide reads, in one-letter code: UBX domain-containing protein 5 (174 aa).

Residues 8 to 58 are a coiled coil; that stretch reads QKEKFAEDRALLSQQNKEYAESLAKDIAKKEEKDKIRFEAEQKELRKKTIQ. Positions 74–120 constitute a UBX domain; the sequence is RLLVRYPNGSRLILSFSPSQPMTSLFDAIILNPACPDYFSVRSVYPR.

As to quaternary structure, forms a complex composed of deubiquitinating enzyme atx-3, adapter ubxn-5 and cdc-48.1. Interacts with atx-3 (via C-terminus). Interacts with cdc-48.1 (via N-terminus) and cdc-48.2. In terms of tissue distribution, specifically expressed in the germline.

Its function is as follows. Probably acts as an adapter for ATPase cdc-48.1 and/or cdc-48.2, conferring substrate specificity. Unlike other UBX domain-containing protein does not bind 'Lys-48'-polyubiquitinated chain. The chain is UBX domain-containing protein 5 from Caenorhabditis elegans.